The following is a 458-amino-acid chain: Mitochondrial-processing peptidase subunit beta (458 aa).

The N-terminal 41 residues, M1 to V41, are a transit peptide targeting the mitochondrion. H73 contacts Zn(2+). The Proton acceptor role is filled by E76. Positions 77 and 153 each coordinate Zn(2+).

It belongs to the peptidase M16 family. In terms of assembly, heterodimer of mppa-1 (alpha) and mppb-1 (beta) subunits, forming the mitochondrial processing protease (MPP) in which mppa-1 is involved in substrate recognition and binding and mppb-1 is the catalytic subunit. Requires Zn(2+) as cofactor.

It localises to the mitochondrion matrix. It carries out the reaction Release of N-terminal transit peptides from precursor proteins imported into the mitochondrion, typically with Arg in position P2.. Its activity is regulated as follows. Binding to mppa-1 is required for catalytic activity. Inhibited by metal chelator ethylenediaminetetraacetic acid (EDTA). Catalytic subunit of the essential mitochondrial processing protease (MPP), which cleaves the mitochondrial sequence off newly imported precursors proteins. Preferentially, cleaves after an arginine at position P2. This chain is Mitochondrial-processing peptidase subunit beta, found in Caenorhabditis elegans.